The sequence spans 462 residues: Runt-related transcription factor 1 (462 aa).

A disordered region spans residues 1–27 (MRIPVDTSTSRRFTPPSTTLSPGKMSE). Residues 7-22 (TSTSRRFTPPSTTLSP) are compositionally biased toward low complexity. The region spanning 50 to 178 (NMVEVLSDHP…TVDGPREPRR (129 aa)) is the Runt domain. The tract at residues 80-84 (RCNKT) is interaction with DNA. Residues N112, E116, R139, and V170 each coordinate chloride. 2 interaction with DNA regions span residues 135 to 143 (RFVGRSGRG) and 168 to 177 (ITVDGPREPR). Residues 399–462 (MMSGGERSPP…RLEEAVWRPY (64 aa)) form a disordered region. 2 stretches are compositionally biased toward polar residues: residues 415-433 (TNAS…NQSD) and 440-450 (SHSNSPTNMGS). The segment covering 453–462 (RLEEAVWRPY) has biased composition (basic and acidic residues).

In terms of assembly, heterodimer with cbfb. runx1 binds DNA as a monomer and through the Runt domain. DNA-binding is increased by heterodimerization. Shows a complex and dynamic expression pattern. In stage 14-24 embryos, expressed in a subset of neuroblasts in the lateral stripe of the neural plate. In late neurula stages, expression begins in the olfactory placodes. Also expressed in structures that play a role in blood formation: at stage 14, expressed on the anterior ventral side of the embryo in the anterior endomesoderm. As the embryo elongates, expression shifts gradually to a V-shaped expression pattern in the presumptive ventral blood island.

It is found in the nucleus. Functionally, involved in primitive hematopoiesis in the embryo. In Xenopus laevis (African clawed frog), this protein is Runt-related transcription factor 1.